The chain runs to 184 residues: Probable RNA 2'-phosphotransferase (184 aa).

The protein belongs to the KptA/TPT1 family.

In terms of biological role, removes the 2'-phosphate from RNA via an intermediate in which the phosphate is ADP-ribosylated by NAD followed by a presumed transesterification to release the RNA and generate ADP-ribose 1''-2''-cyclic phosphate (APPR&gt;P). May function as an ADP-ribosylase. This chain is Probable RNA 2'-phosphotransferase, found in Rhodopirellula baltica (strain DSM 10527 / NCIMB 13988 / SH1).